The sequence spans 231 residues: Uridylate kinase (231 aa).

6–9 (KLSG) lines the ATP pocket. Positions 14 to 19 (GEGGRG) are involved in allosteric activation by GTP. 2 residues coordinate ATP: Gly-49 and Arg-53. UMP is bound by residues Asp-66 and 127–134 (TSNPFFTT). ATP is bound by residues Thr-154, Tyr-160, and Asp-163.

It belongs to the UMP kinase family. As to quaternary structure, homohexamer.

It localises to the cytoplasm. The enzyme catalyses UMP + ATP = UDP + ADP. Its pathway is pyrimidine metabolism; CTP biosynthesis via de novo pathway; UDP from UMP (UMPK route): step 1/1. Allosterically activated by GTP. Inhibited by UTP. Functionally, catalyzes the reversible phosphorylation of UMP to UDP. The polypeptide is Uridylate kinase (Thermotoga petrophila (strain ATCC BAA-488 / DSM 13995 / JCM 10881 / RKU-1)).